A 721-amino-acid polypeptide reads, in one-letter code: Centlein (721 aa).

Residues 52-164 (KNEKAISEQT…LRDENEEVVN (113 aa)) adopt a coiled-coil conformation. Disordered stretches follow at residues 156–180 (RDENEEVVNPEEKEHCPTDKAKSEM) and 259–288 (ETSQNIRPIENDGNQKETDQTEDSRAQQEV). Basic and acidic residues-rich tracts occupy residues 165 to 178 (PEEKEHCPTDKAKS) and 267 to 284 (IENDGNQKETDQTEDSRA). 2 coiled-coil regions span residues 345–515 (LLRE…EDLK) and 573–626 (QSEQ…TQKS). The residue at position 658 (T658) is a Phosphothreonine.

In terms of assembly, interacts with CEP250 and CEP68. Interacts with NEK2; the interaction leads to phosphorylation of CNTLN. In terms of processing, phosphorylated directly or indirectly by NEK2.

It localises to the cytoplasm. Its subcellular location is the cytoskeleton. The protein localises to the microtubule organizing center. It is found in the centrosome. The protein resides in the centriole. Functionally, required for centrosome cohesion and recruitment of CEP68 to centrosomes. In Rattus norvegicus (Rat), this protein is Centlein.